Here is a 90-residue protein sequence, read N- to C-terminus: Hemoglobin subunit alpha-1 (90 aa).

Residues 1 to 90 (VLTDDDKNHV…SKLSDLHAEK (90 aa)) form the Globin domain.

Belongs to the globin family. In terms of assembly, heterotetramer of two alpha chains and two beta chains. In terms of tissue distribution, red blood cells.

Involved in oxygen transport from the lung to the various peripheral tissues. This is Hemoglobin subunit alpha-1 from Saara hardwickii (Indian spiny-tailed lizard).